The chain runs to 275 residues: NH(3)-dependent NAD(+) synthetase (275 aa).

46 to 53 (GISGGQDS) is an ATP binding site. Asp52 contacts Mg(2+). A deamido-NAD(+)-binding site is contributed by Arg140. An ATP-binding site is contributed by Thr160. Residue Glu165 participates in Mg(2+) binding. Deamido-NAD(+)-binding residues include Lys173 and Asp180. 2 residues coordinate ATP: Lys189 and Thr211. Position 260–261 (260–261 (HK)) interacts with deamido-NAD(+).

This sequence belongs to the NAD synthetase family. Homodimer.

It carries out the reaction deamido-NAD(+) + NH4(+) + ATP = AMP + diphosphate + NAD(+) + H(+). It participates in cofactor biosynthesis; NAD(+) biosynthesis; NAD(+) from deamido-NAD(+) (ammonia route): step 1/1. Catalyzes the ATP-dependent amidation of deamido-NAD to form NAD. Uses ammonia as a nitrogen source. This chain is NH(3)-dependent NAD(+) synthetase, found in Salmonella typhi.